Consider the following 608-residue polypeptide: Dextranase (608 aa).

The N-terminal stretch at Met-1–Ile-19 is a signal peptide. Residues Gly-20–His-34 constitute a propeptide that is removed on maturation. N-linked (GlcNAc...) asparagine glycans are attached at residues Asn-39, Asn-571, and Asn-574.

It belongs to the glycosyl hydrolase 49 family. N-glycosylated.

Its subcellular location is the secreted. It carries out the reaction Endohydrolysis of (1-&gt;6)-alpha-D-glucosidic linkages in dextran.. This Talaromyces minioluteus (Filamentous fungus) protein is Dextranase (DEX).